Consider the following 591-residue polypeptide: Putative F-box protein At1g32140 (591 aa).

An F-box domain is found at 2–49 (TMMSDLSLDLVEEILCRVPITSLKAVRSSCKLWNVLSKNRILCKTEAR). A compositionally biased stretch (basic residues) spans 567-581 (AGRKRKEKKTKRKSK). Residues 567 to 591 (AGRKRKEKKTKRKSKDKQMKLSNKV) form a disordered region.

The polypeptide is Putative F-box protein At1g32140 (Arabidopsis thaliana (Mouse-ear cress)).